We begin with the raw amino-acid sequence, 374 residues long: Flagellar P-ring protein (374 aa).

A signal peptide spans 1 to 29 (MPGVGISRIVRIAVAALVALAPLMTPAHA).

This sequence belongs to the FlgI family. As to quaternary structure, the basal body constitutes a major portion of the flagellar organelle and consists of four rings (L,P,S, and M) mounted on a central rod.

It is found in the periplasm. The protein resides in the bacterial flagellum basal body. Functionally, assembles around the rod to form the L-ring and probably protects the motor/basal body from shearing forces during rotation. The sequence is that of Flagellar P-ring protein from Nitrobacter hamburgensis (strain DSM 10229 / NCIMB 13809 / X14).